Here is a 215-residue protein sequence, read N- to C-terminus: Cytochrome b6 (215 aa).

Residues isoleucine 32–phenylalanine 52 form a helical membrane-spanning segment. Cysteine 35 is a binding site for heme c. Residues histidine 86 and histidine 100 each coordinate heme b. 3 helical membrane-spanning segments follow: residues alanine 90–phenylalanine 110, leucine 116–tyrosine 136, and leucine 186–isoleucine 206. Heme b is bound by residues histidine 187 and histidine 202.

It belongs to the cytochrome b family. PetB subfamily. In terms of assembly, the 4 large subunits of the cytochrome b6-f complex are cytochrome b6, subunit IV (17 kDa polypeptide, PetD), cytochrome f and the Rieske protein, while the 4 small subunits are PetG, PetL, PetM and PetN. The complex functions as a dimer. Heme b is required as a cofactor. Requires heme c as cofactor.

It is found in the plastid. The protein resides in the chloroplast thylakoid membrane. Its function is as follows. Component of the cytochrome b6-f complex, which mediates electron transfer between photosystem II (PSII) and photosystem I (PSI), cyclic electron flow around PSI, and state transitions. This is Cytochrome b6 from Nicotiana tabacum (Common tobacco).